We begin with the raw amino-acid sequence, 310 residues long: Thioredoxin reductase (310 aa).

An FAD-binding site is contributed by asparagine 34–glutamine 41. A disulfide bridge connects residues cysteine 135 and cysteine 138. Residue aspartate 281–alanine 290 coordinates FAD.

The protein belongs to the class-II pyridine nucleotide-disulfide oxidoreductase family. In terms of assembly, homodimer. Requires FAD as cofactor.

It localises to the cytoplasm. The enzyme catalyses [thioredoxin]-dithiol + NADP(+) = [thioredoxin]-disulfide + NADPH + H(+). The protein is Thioredoxin reductase (trxB) of Rickettsia conorii (strain ATCC VR-613 / Malish 7).